The following is a 566-amino-acid chain: MIGKWRMGLWALAILTVPMYFIVTEGRKTSWGLENEALIVRCPQRGGAINPVEWYYSNTNERIPTQKRNRIFVSRDRLKFLPAKVEDSGIYTCVIRSPESIKTGSLNVTIYKRPPNCKIPDYMMYSTVDGSDKNSKITCPTIALYNWTAPVQWFKNCKALQGPRFRAHMSYLFIDKVSHVDEGDYTCRFTHTENGTNYIVTATRSFTVEEKGFSTFPVITNPPHNYTVEVEIGKTANIACSACFGTASQFVAVLWQINKTRIGSFGKARIQEEKGPNKSSSNGMICLTSLLRITGVTDKDFSLKYDCVAMNHHGVIRHPVRLRRKQPIDHQSTYYIVAGCSLLLMFINVLVIVLKVFWIEVALFWRDIMAPYKTQNDGKLYDAYIIYPRVFRGSAAGTGSVEYFVHYTLPDVLENKCGYKLCIYGRDLLPGQDAATVVESSIQNSRRQVFVLAPHMMHSKEFAYEQEIALHSALIQNNSKVILIEMEPMGEASRLQLGDLQDSLQHLVKMQGTIKWREDHVADKQSLSSKFWKHVRYQMPVPKRPPKMASVAAPLSGKVCLDLKHF.

A signal peptide spans 1-26 (MIGKWRMGLWALAILTVPMYFIVTEG). Ig-like C2-type domains lie at 27–109 (RKTS…LNVT), 120–207 (PDYM…RSFT), and 217–323 (PVIT…VRLR). Residues 27–331 (RKTSWGLENE…LRRKQPIDHQ (305 aa)) are Extracellular-facing. A disulfide bond links C42 and C93. N-linked (GlcNAc...) asparagine glycans are attached at residues N107, N146, and N194. Cystine bridges form between C117-C157 and C139-C187. Residues 204 to 216 (RSFTVEEKGFSTF) are flexible linker. 3 N-linked (GlcNAc...) asparagine glycosylation sites follow: N225, N258, and N277. 2 disulfides stabilise this stretch: C240–C307 and C243–C286. K325 participates in a covalent cross-link: Glycyl lysine isopeptide (Lys-Gly) (interchain with G-Cter in ubiquitin). Residues 332–354 (STYYIVAGCSLLLMFINVLVIVL) form a helical membrane-spanning segment. The Cytoplasmic portion of the chain corresponds to 355–566 (KVFWIEVALF…GKVCLDLKHF (212 aa)). Residues 379–539 (KLYDAYIIYP…KFWKHVRYQM (161 aa)) enclose the TIR domain. S441 is subject to Phosphoserine. E465 is an active-site residue.

The protein belongs to the interleukin-1 receptor family. As to quaternary structure, interacts with MYD88, IRAK1, IRAK4, and TRAF6. Bound to its ligand IL-33, interacts with IL1RAP to form the minimal interleukin-33 signaling complex with a 1:1:1 stoichiometry. Interacts with KIT (bound to KITLG/SCF). A mast cell-specific KITLG/SCF-induced interleukin-33 signaling complex contains IL1RL1, IL1RAP, KIT and MYD88. Interacts with TMED1. Phosphorylated by GSK3B at Ser-441; leading to proteasomal degradation. In terms of processing, ubiquitinated at Lys-325 in a FBXL19-mediated manner; leading to proteasomal degradation. Ubiquitination by TRAF6 via 'Lys-27'-linked polyubiquitination and deubiquitination by USP38 serves as a critical regulatory mechanism for fine-tuning IL1RL1-mediated inflammatory response. In terms of tissue distribution, isoform A is detected in spleen, lung, bone marrow and lymh node. Isoform B is predominant in fibroblasts.

The protein resides in the cell membrane. It localises to the secreted. It carries out the reaction NAD(+) + H2O = ADP-D-ribose + nicotinamide + H(+). In terms of biological role, receptor for interleukin-33 (IL-33) which plays crucial roles in innate and adaptive immunity, contributing to tissue homeostasis and responses to environmental stresses together with coreceptor IL1RAP. Its stimulation recruits MYD88, IRAK1, IRAK4, and TRAF6, followed by phosphorylation of MAPK3/ERK1 and/or MAPK1/ERK2, MAPK14, and MAPK8. Possibly involved in helper T-cell function. Upon tissue injury, induces UCP2-dependent mitochondrial rewiring that attenuates the generation of reactive oxygen species and preserves the integrity of Krebs cycle required for persistent production of itaconate and subsequent GATA3-dependent differentiation of inflammation-resolving alternatively activated macrophages. Its function is as follows. Inhibits IL-33 signaling. This Rattus norvegicus (Rat) protein is Interleukin-1 receptor-like 1 (Il1rl1).